The primary structure comprises 214 residues: Adenylate kinase (214 aa).

10-15 (GVGKGT) lines the ATP pocket. The interval 30–59 (STGDILRAAVKELTPMGAKAKGYMDSGALV) is NMP. AMP contacts are provided by residues T31, R36, 57 to 59 (ALV), 85 to 88 (GFPR), and Q92. The LID stretch occupies residues 126–163 (GRRACANCGAGYHVDFAPSKVAGVCDACSGQLVQREDD). R127 lines the ATP pocket. Residues C130, C133, C150, and C153 each coordinate Zn(2+). AMP-binding residues include R160 and R171. An ATP-binding site is contributed by G199.

The protein belongs to the adenylate kinase family. As to quaternary structure, monomer.

Its subcellular location is the cytoplasm. The catalysed reaction is AMP + ATP = 2 ADP. It participates in purine metabolism; AMP biosynthesis via salvage pathway; AMP from ADP: step 1/1. Catalyzes the reversible transfer of the terminal phosphate group between ATP and AMP. Plays an important role in cellular energy homeostasis and in adenine nucleotide metabolism. The polypeptide is Adenylate kinase (Geobacter sp. (strain M21)).